The sequence spans 420 residues: MTSTQAIFEKVQKVKKTINTATTAEKNHALEEMAKQLWLSRTDILAANELDMTTAKGKISDVMLDRLYLDEERIAAMAEGIRQLIDLEDPVGQVLERTELDNGLVISKKRVAMGVIGIIYESRPNVTSDAAALALKSGSAVVLRSGKDAYQTALAIVTALKEGLAQTKISPDCIQLVSDTSRASAQAMMKAKGYLDLLIPRGGAGLIQAVVENATVPVIETGTGIVHVYVDKDADQDKALAIIENAKTSRPSVCNAMEVLLVHEEIAERFLPRLQKMLVTDRVAAQEKTIELRLDEKAAQYISGSQARPEDFDTEFLDYVLAVKLVSSLEEAVEHIEAHSTHHSDAIVTENDSAAAYFTEQVDSAAVYVNASTRFTDGGQFGLGCEMGISTQKLHARGPMGLKELTSYKYVIQGTGQVRK.

The protein belongs to the gamma-glutamyl phosphate reductase family.

Its subcellular location is the cytoplasm. It carries out the reaction L-glutamate 5-semialdehyde + phosphate + NADP(+) = L-glutamyl 5-phosphate + NADPH + H(+). Its pathway is amino-acid biosynthesis; L-proline biosynthesis; L-glutamate 5-semialdehyde from L-glutamate: step 2/2. Functionally, catalyzes the NADPH-dependent reduction of L-glutamate 5-phosphate into L-glutamate 5-semialdehyde and phosphate. The product spontaneously undergoes cyclization to form 1-pyrroline-5-carboxylate. The chain is Gamma-glutamyl phosphate reductase from Streptococcus sanguinis (strain SK36).